A 363-amino-acid chain; its full sequence is Tetraacyldisaccharide 4'-kinase (363 aa).

Residue 62-69 (RVGGTGKT) participates in ATP binding.

This sequence belongs to the LpxK family.

The enzyme catalyses a lipid A disaccharide + ATP = a lipid IVA + ADP + H(+). The protein operates within glycolipid biosynthesis; lipid IV(A) biosynthesis; lipid IV(A) from (3R)-3-hydroxytetradecanoyl-[acyl-carrier-protein] and UDP-N-acetyl-alpha-D-glucosamine: step 6/6. Functionally, transfers the gamma-phosphate of ATP to the 4'-position of a tetraacyldisaccharide 1-phosphate intermediate (termed DS-1-P) to form tetraacyldisaccharide 1,4'-bis-phosphate (lipid IVA). The sequence is that of Tetraacyldisaccharide 4'-kinase from Polynucleobacter asymbioticus (strain DSM 18221 / CIP 109841 / QLW-P1DMWA-1) (Polynucleobacter necessarius subsp. asymbioticus).